A 445-amino-acid polypeptide reads, in one-letter code: Tubulin beta-3 chain (445 aa).

Residues Q11, E69, S138, G142, T143, G144, N204, and N226 each contribute to the GTP site. Residue E69 participates in Mg(2+) binding. Positions 421–445 (EYQQYQDATADEEEEYDEEEEEEAA) are disordered. Residues 429–445 (TADEEEEYDEEEEEEAA) are compositionally biased toward acidic residues.

It belongs to the tubulin family. Dimer of alpha and beta chains. A typical microtubule is a hollow water-filled tube with an outer diameter of 25 nm and an inner diameter of 15 nM. Alpha-beta heterodimers associate head-to-tail to form protofilaments running lengthwise along the microtubule wall with the beta-tubulin subunit facing the microtubule plus end conferring a structural polarity. Microtubules usually have 13 protofilaments but different protofilament numbers can be found in some organisms and specialized cells. Requires Mg(2+) as cofactor.

Its subcellular location is the cytoplasm. It localises to the cytoskeleton. Its function is as follows. Tubulin is the major constituent of microtubules, a cylinder consisting of laterally associated linear protofilaments composed of alpha- and beta-tubulin heterodimers. Microtubules grow by the addition of GTP-tubulin dimers to the microtubule end, where a stabilizing cap forms. Below the cap, tubulin dimers are in GDP-bound state, owing to GTPase activity of alpha-tubulin. In Triticum aestivum (Wheat), this protein is Tubulin beta-3 chain (TUBB3).